The following is a 510-amino-acid chain: NAD(P)H-quinone oxidoreductase subunit 2 B, chloroplastic (510 aa).

The next 13 membrane-spanning stretches (helical) occupy residues 24-44, 57-77, 99-119, 124-144, 149-169, 183-203, 227-247, 295-315, 323-343, 354-374, 395-415, 428-448, and 484-504; these read LLLF…GLIL, LPWF…ALLF, IFQF…VEYI, MAIT…MFLC, LITI…LSGY, YLLM…WLYG, PGIS…LSPA, WHLL…IIAI, MLAY…IVGD, YMLF…LFGL, ALSL…AGFF, GLYS…YYYL, and MIVC…IIAI.

It belongs to the complex I subunit 2 family. In terms of assembly, NDH is composed of at least 16 different subunits, 5 of which are encoded in the nucleus.

It localises to the plastid. It is found in the chloroplast thylakoid membrane. It catalyses the reaction a plastoquinone + NADH + (n+1) H(+)(in) = a plastoquinol + NAD(+) + n H(+)(out). The catalysed reaction is a plastoquinone + NADPH + (n+1) H(+)(in) = a plastoquinol + NADP(+) + n H(+)(out). In terms of biological role, NDH shuttles electrons from NAD(P)H:plastoquinone, via FMN and iron-sulfur (Fe-S) centers, to quinones in the photosynthetic chain and possibly in a chloroplast respiratory chain. The immediate electron acceptor for the enzyme in this species is believed to be plastoquinone. Couples the redox reaction to proton translocation, and thus conserves the redox energy in a proton gradient. The chain is NAD(P)H-quinone oxidoreductase subunit 2 B, chloroplastic from Jasminum nudiflorum (Winter jasmine).